A 409-amino-acid polypeptide reads, in one-letter code: uncharacterized protein (409 aa).

Disordered regions lie at residues 12-32, 133-160, and 194-213; these read ENTENQKIEATEETAPTLHCP, EVSTQKSWSSEKNWSGLSQGPGTASREQ, and TVSSKAGRNPSGSPEQGLST. Residues 134–160 show a composition bias toward polar residues; it reads VSTQKSWSSEKNWSGLSQGPGTASREQ.

This is an uncharacterized protein from Mus musculus (Mouse).